The primary structure comprises 343 residues: C5a anaphylatoxin chemotactic receptor 2 (343 aa).

Residues 1-44 (MLNDTTSKDYEYEYDQEQYSDLLNVPVDCPAGNCFSNDAYLIVL) are Extracellular-facing. The N-linked (GlcNAc...) asparagine glycan is linked to Asn-3. The helical transmembrane segment at 45–67 (LGLYSVIFLVGVPGNTLLAWVTW) threads the bilayer. The Cytoplasmic segment spans residues 68–78 (KESRHRLGASW). Residues 79-101 (FLHLTMADLLCCVSLPFLAVPIA) traverse the membrane as a helical segment. At 102–120 (QKGHWPYGTAGCWLLSSIT) the chain is on the extracellular side. Cys-113 and Cys-192 are oxidised to a cystine. A helical transmembrane segment spans residues 121–143 (VLSMYASVLLLTGLSGDLFLLAF). The Cytoplasmic portion of the chain corresponds to 144–155 (RPSWKNADQRTC). A helical membrane pass occupies residues 156 to 178 (GVRVVQVSSWMLALLLTVPGAVY). Residues 179-208 (RKLLQEHYPPRLVCGTNYGGSVTAEVTITT) are Extracellular-facing. A helical membrane pass occupies residues 209–231 (VRFLFGFLVPLVFMASCHGILQR). The Cytoplasmic portion of the chain corresponds to 232-243 (QMARRHWPLGTA). The chain crosses the membrane as a helical span at residues 244 to 266 (VVVGFFICWTPFHLLRVIIAVAS). Residues 267 to 280 (SHSPLLAWALEAEP) lie on the Extracellular side of the membrane. A helical transmembrane segment spans residues 281-300 (LVTGLALAHSALNPIMFLYF). Over 301 to 343 (GRKQLCKSLQAACHWALRDLQDEEESAVTKVSTSQEMVSEMPV) the chain is Cytoplasmic. Phosphoserine is present on Ser-326.

It belongs to the G-protein coupled receptor 1 family. As to quaternary structure, interacts with C3 (the anaphylatoxin peptide C3a and the adipogenic hormone ASP); the interaction occurs with higher affinity for ASP, enhancing the phosphorylation and activation of GPR77, recruitment of ARRB2 to the cell surface and endocytosis of GRP77.

Its subcellular location is the cell membrane. Its function is as follows. Receptor for the chemotactic and inflammatory C3a, C4a and C5a anaphylatoxin peptides and also for their dearginated forms ASP/C3adesArg, C4adesArg and C5adesArg respectively. Couples weakly to G(i)-mediated signaling pathways. In Rattus norvegicus (Rat), this protein is C5a anaphylatoxin chemotactic receptor 2 (C5ar2).